The following is a 396-amino-acid chain: tRNA(Met) cytidine acetate ligase (396 aa).

ATP contacts are provided by residues 9-22 (IVEY…HLHH), Gly103, Asn154, and Arg179.

It belongs to the TmcAL family.

It is found in the cytoplasm. It catalyses the reaction cytidine(34) in elongator tRNA(Met) + acetate + ATP = N(4)-acetylcytidine(34) in elongator tRNA(Met) + AMP + diphosphate. In terms of biological role, catalyzes the formation of N(4)-acetylcytidine (ac(4)C) at the wobble position of elongator tRNA(Met), using acetate and ATP as substrates. First activates an acetate ion to form acetyladenylate (Ac-AMP) and then transfers the acetyl group to tRNA to form ac(4)C34. The sequence is that of tRNA(Met) cytidine acetate ligase from Fusobacterium nucleatum subsp. nucleatum (strain ATCC 25586 / DSM 15643 / BCRC 10681 / CIP 101130 / JCM 8532 / KCTC 2640 / LMG 13131 / VPI 4355).